A 215-amino-acid polypeptide reads, in one-letter code: Adenylate kinase (215 aa).

Gly10–Thr15 contributes to the ATP binding site. An NMP region spans residues Ser30–Val59. Residues Thr31, Arg36, Glu57–Val59, Gly86–Arg89, and Gln93 contribute to the AMP site. The LID stretch occupies residues Gly127–Asp165. Position 128 (Arg128) interacts with ATP. 2 residues coordinate Zn(2+): Cys131 and Cys134. Thr137–Tyr138 is an ATP binding site. Zn(2+)-binding residues include Cys151 and Cys154. Residues Arg162 and Arg173 each coordinate AMP. Residue Gln201 participates in ATP binding.

Belongs to the adenylate kinase family. In terms of assembly, monomer.

The protein resides in the cytoplasm. The catalysed reaction is AMP + ATP = 2 ADP. Its pathway is purine metabolism; AMP biosynthesis via salvage pathway; AMP from ADP: step 1/1. Functionally, catalyzes the reversible transfer of the terminal phosphate group between ATP and AMP. Plays an important role in cellular energy homeostasis and in adenine nucleotide metabolism. This Lactococcus lactis subsp. cremoris (strain SK11) protein is Adenylate kinase.